The following is a 501-amino-acid chain: Alveolysin (501 aa).

A signal peptide spans 1–32 (MKKKSNHLKGRKVLVSLLVSLQVFAFASISSA). The next 4 beta stranded transmembrane spans lie at 191–204 (QNQI…NAKV), 211–220 (IDFNAVANGE), 289–298 (SNDVQTAFKL), and 306–318 (QASG…YENS). The Conserved undecapeptide motif lies at 460-470 (ECTGLAWEWWR). Positions 492–493 (TL) match the Cholesterol binding motif.

It belongs to the cholesterol-dependent cytolysin family. As to quaternary structure, homooligomeric pore complex of 35 to 50 subunits; when inserted in the host membrane.

It localises to the secreted. It is found in the host cell membrane. Inhibited by cholesterol and thiol reagents. Its function is as follows. A cholesterol-dependent toxin that causes cytolysis by forming pores in cholesterol containing host membranes. After binding to target membranes, the protein undergoes a major conformation change, leading to its insertion in the host membrane and formation of an oligomeric pore complex. Cholesterol is required for binding to host cell membranes, membrane insertion and pore formation; cholesterol binding is mediated by a Thr-Leu pair in the C-terminus. Can be reversibly inactivated by oxidation. The chain is Alveolysin (alv) from Paenibacillus alvei (Bacillus alvei).